We begin with the raw amino-acid sequence, 96 residues long: Large ribosomal subunit protein uL18m (96 aa).

Belongs to the universal ribosomal protein uL18 family.

Its subcellular location is the mitochondrion. The sequence is that of Large ribosomal subunit protein uL18m (RPL18) from Reclinomonas americana.